A 387-amino-acid polypeptide reads, in one-letter code: Glucose-1-phosphate adenylyltransferase (387 aa).

Alpha-D-glucose 1-phosphate contacts are provided by residues Y99, G164, 179 to 180, and S190; that span reads EK.

Belongs to the bacterial/plant glucose-1-phosphate adenylyltransferase family. Homotetramer.

The catalysed reaction is alpha-D-glucose 1-phosphate + ATP + H(+) = ADP-alpha-D-glucose + diphosphate. Its pathway is glycan biosynthesis; glycogen biosynthesis. Functionally, involved in the biosynthesis of ADP-glucose, a building block required for the elongation reactions to produce glycogen. Catalyzes the reaction between ATP and alpha-D-glucose 1-phosphate (G1P) to produce pyrophosphate and ADP-Glc. In Geobacillus stearothermophilus (Bacillus stearothermophilus), this protein is Glucose-1-phosphate adenylyltransferase.